A 1164-amino-acid polypeptide reads, in one-letter code: Receptor-like protein kinase BRI1-like 3 (1164 aa).

The signal sequence occupies residues 1–23 (MKQQWQFLILCLLVLFLTVDSRG). Topologically, residues 24–772 (RRLLSDDVND…RSHAHPKKQS (749 aa)) are extracellular. N32 carries N-linked (GlcNAc...) asparagine glycosylation. Positions 65-72 (CTWRGVSC) match the Cys pair 1 motif. LRR repeat units follow at residues 77-98 (RVIG…NNLT), 102-123 (NLRS…SSSG), 125-146 (SLEV…DYVF), 151-173 (NLVS…PSAS), 176-197 (RITT…TFIA), 202-224 (SLKH…SFGL), 227-248 (NLTV…VSLS), 252-274 (LLET…DYWG), 278-300 (NLRQ…LSLL), 303-325 (TLEV…FTSC), 327-347 (SLQS…STVV), 352-375 (RITN…TNCS), 376-397 (NLRV…GFCS), 403-424 (VLEK…ELGK), 427-448 (SLKT…EIWT), 451-473 (KLSD…ICVD), 476-498 (NLET…ISKC), 500-523 (NMLW…GKLE), 524-546 (KLAI…LGNC), and 548-570 (NLIW…LASQ). N-linked (GlcNAc...) asparagine glycans are attached at residues N96 and N112. Residue N156 is glycosylated (N-linked (GlcNAc...) asparagine). N212, N227, and N257 each carry an N-linked (GlcNAc...) asparagine glycan. N-linked (GlcNAc...) asparagine glycosylation is found at N362 and N373. Residue N461 is glycosylated (N-linked (GlcNAc...) asparagine). N-linked (GlcNAc...) asparagine glycosylation is found at N532, N558, and N638. LRR repeat units follow at residues 640–662 (SMIY…YGAM), 664–686 (YLQV…FGGL), 688–711 (AIGV…GGLS), and 712–734 (FLSD…GQLT). Residues N722 and N743 are each glycosylated (N-linked (GlcNAc...) asparagine). The Cys pair 2 signature appears at 748 to 755 (CGVPLPPC). The helical transmembrane segment at 773–793 (IATGMSAGIVFSFMCIVMLIM) threads the bilayer. Residues 794–1164 (ALYRARKVQK…LVEESRDKEP (371 aa)) lie on the Cytoplasmic side of the membrane. T847 and T855 each carry phosphothreonine. In terms of domain architecture, Protein kinase spans 858-1136 (FSADSMIGSG…QVMTMFKELV (279 aa)). ATP is bound by residues 864–872 (IGSGGFGDV) and K886. Y931 bears the Phosphotyrosine mark. The active-site Proton acceptor is the D985. S1020 carries the phosphoserine modification. Phosphotyrosine is present on Y1028.

Belongs to the protein kinase superfamily. Ser/Thr protein kinase family. Autophosphorylated on Tyr and Thr residues. As to expression, predominantly expressed in vascular tissues. Expressed only during postembryonic development with a very discrete pattern of expression, preferentially in the two protophloem cell files at the elongation zone of the root. The expression in these two cell files attenuates as the phloem cells differentiate in the upper root. In cotyledons and leaves, it is expressed in phloem cells, starting at the cotyledons and shoot apex, moving toward the basal part of the leaves, where the expression is weak. Expressed in the secondary and tertiary veins and in the upper part of the cotyledons and leaves. Weakly or not expressed in the inflorescence stems. Has some complementary expression with BRL1.

Its subcellular location is the cell membrane. The enzyme catalyses L-seryl-[protein] + ATP = O-phospho-L-seryl-[protein] + ADP + H(+). It carries out the reaction L-threonyl-[protein] + ATP = O-phospho-L-threonyl-[protein] + ADP + H(+). The catalysed reaction is L-tyrosyl-[protein] + ATP = O-phospho-L-tyrosyl-[protein] + ADP + H(+). Functionally, receptor with a dual specificity kinase activity acting on both serine/threonine- and tyrosine-containing substrates. Binds brassinolide. Regulates, in response to brassinosteroid binding, a signaling cascade involved in plant development. May be involved in cell growth and vascular differentiation. The chain is Receptor-like protein kinase BRI1-like 3 (BRL3) from Arabidopsis thaliana (Mouse-ear cress).